Here is a 608-residue protein sequence, read N- to C-terminus: MASIEEIAHQIIEQQMGEIVTEQPTGQKIQIVTALDHNTQGKQFILTNHDGSTPNKVILARQDSTPGKVFFTTPDAAGVNQLFFTTPDLSTQQLQFLTDNSSSEQGPNKVFDLCVVCGDKASGRHYGEVTCEGCKGFFKRSIRKNLVYSCRGSKDCIINKHHRNRCQYCRLQRCIAFGMKQDSVQCERKPIEVSREKSSNCAASTEKIYIRKDLRSPLAATPTFVTDSETARSAGLLDSGMFVNIHQSGIKTESTMLMTPDKAVSCQGDLSTLASVVTSLANLGKTKDPAPNSNEVSMIESLSNGDTSYTSVCEFHQEMQTNGDVSRAFDTLAKALNPGESTACQSSGEGMEGNVHLIAGDSSINYIEKEGPLLSDSHVAFRLTMPSPMPEYLNVHYIGESASRLLFLSMHWALSIPSFQALGQENSISLVKAYWNELFTLGLAQCWQVMNVATILATFVNCLHSSLQQDKISAERRKLLMEHIFKLQEFCNSMVKLCIDGYEYAYLKAIVLFSPDHPGLENMEQIEKFQEKAYVEFQDYITKTYPDDTYRLSRLLLRLPALRLMNATITEELFFKGLIGNVRIDSVIPHILKMEPADYNSQIIGHSI.

Residues 1-179 (MASIEEIAHQ…RLQRCIAFGM (179 aa)) form a required for interaction with KAT2B region. Positions 111 to 186 (FDLCVVCGDK…FGMKQDSVQC (76 aa)) form a DNA-binding region, nuclear receptor. 2 NR C4-type zinc fingers span residues 114-134 (CVVC…CEGC) and 150-169 (CRGS…CQYC). Phosphoserine is present on residues Ser198 and Ser216. Thr221 is modified (phosphothreonine). Thr223 bears the Phosphothreonine; by MAPK1 mark. Lys251 is covalently cross-linked (Glycyl lysine isopeptide (Lys-Gly) (interchain with G-Cter in SUMO); alternate). Residue Lys251 forms a Glycyl lysine isopeptide (Lys-Gly) (interchain with G-Cter in SUMO2); alternate linkage. The region spanning 353–595 (GNVHLIAGDS…SVIPHILKME (243 aa)) is the NR LBD domain. Phosphoserine; by PKC is present on Ser586. The segment at 589–608 (PHILKMEPADYNSQIIGHSI) is required for interaction with NRIP1. Lys593 is covalently cross-linked (Glycyl lysine isopeptide (Lys-Gly) (interchain with G-Cter in SUMO2)).

Belongs to the nuclear hormone receptor family. NR2 subfamily. As to quaternary structure, homodimer. Heterodimer; with NR2C2 which is required for chromatin remodeling and for binding to promoter regions such as globin DR1 repeats. Interacts with ESR1; the interaction prevents homodimerization of ESR1 and suppresses its transcriptional activity and cell growth. Interacts with NRIP1 (via its LXXLL motifs); the interaction provides corepressor activity. Interacts with HDAC3 (via the DNA-binding domain); the interaction recruits phosphorylated NR2C1 to PML bodies for sumoylation. Interacts with HDAC4 (via the DNA-binding domain). Interacts with PIAS1; the interaction is required for sumoylation of NR2C1. Interacts with UBE2I; the interaction is required for sumoylation of NR2C1. Interacts with KAT2B; the interaction acts as a corepressor of gene expression. Post-translationally, sumoylation requires both PIAS1 and UBE2I. Sumoylation appears to dissociate NR2C1 from the PML nuclear bodies. Enhances the interaction with NRIP1 but inhibits interaction with KAT2B. In proliferating cells, stimulation by all-trans retinoic acid, activation of MAPK1-mediated phosphorylation and recruitment to PML bodies with subsequent sumoylation, suppresses OCT4 expression. In terms of processing, phosphorylated on several serine and threonine residues. Phosphorylation on Thr-223, stimulated by all-trans retinoic acid (atRA) mediates PML location and sumoylation in proliferating cells which then modulates its association with effector molecules, KAT2B and NRIP1. Phosphorylation on Ser-586 by PKC is important for protein stability and function as activator of RARB.

It is found in the nucleus. Its subcellular location is the PML body. In terms of biological role, orphan nuclear receptor. Binds the IR7 element in the promoter of its own gene in an autoregulatory negative feedback mechanism. Primarily repressor of a broad range of genes including ESR1 and RARB. Together with NR2C2, forms the core of the DRED (direct repeat erythroid-definitive) complex that represses embryonic and fetal globin transcription. Binds to hormone response elements (HREs) consisting of two 5'-AGGTCA-3' half site direct repeat consensus sequences. Also activator of OCT4 gene expression. Plays a fundamental role in early embryogenesis and regulates embryonic stem cell proliferation and differentiation. Mediator of retinoic acid-regulated preadipocyte proliferation. In Bos taurus (Bovine), this protein is Nuclear receptor subfamily 2 group C member 1 (NR2C1).